The sequence spans 240 residues: MORN repeat-containing protein 3 (240 aa).

The segment at 6-35 is interaction with MDM2; that stretch reads CPKKSESLWKGWDRKAQKNGLRRQVYAVNG. 7 MORN repeats span residues 38–60, 62–84, 91–113, 114–136, 137–159, 160–182, and 184–205; these read YVGE…KNGA, YEGD…DQQT, YSGW…PKEY, YEGE…NGDI, YEGQ…NGNR, YEGC…DHGQ, and FEGF…GRDE. An interaction with SIRT1 region spans residues 76-100; sequence TLSLPDQQTGKCRRVYSGWWKGDKK. Residues 206–240 are interaction with TP53; sequence APEPTQFPIPEVKILDPDGVLAQALAMFKKTEEGD.

In terms of assembly, interacts with MEIG1. Interacts with TP53, MDM2 and SIRT1; the interactions mediate post-transcriptional modifications of TP53 by MDM2 and SIRT1.

The protein localises to the cytoplasmic vesicle. It is found in the secretory vesicle. It localises to the acrosome. Its function is as follows. Assembles a suppression complex (suppresome) by tethering SIRT1 and MDM2 to regulate composite modifications of p53/TP53. Confers both deacetylation-mediated functional inactivation, by SIRT1, and ubiquitination-dependent degradation, by MDM2, of p53/TP53, promoting a proliferative and cell survival behaviors. May play a role in the regulation of spermatogenesis. The sequence is that of MORN repeat-containing protein 3 (MORN3) from Macaca fascicularis (Crab-eating macaque).